The chain runs to 488 residues: Catalase (488 aa).

Residues 1–24 (MTDRRNLTTNQGVPIGDNQNSMTA) form a disordered region. Residues 7–23 (LTTNQGVPIGDNQNSMT) show a composition bias toward polar residues. Residues His55 and Asn128 contribute to the active site. Position 338 (Tyr338) interacts with heme.

The protein belongs to the catalase family. Requires heme as cofactor.

The protein resides in the cytoplasm. The enzyme catalyses 2 H2O2 = O2 + 2 H2O. In terms of biological role, decomposes hydrogen peroxide into water and oxygen; serves to protect cells from the toxic effects of hydrogen peroxide. This chain is Catalase (kat), found in Listeria seeligeri.